The chain runs to 201 residues: Small ribosomal subunit protein uS4c (201 aa).

One can recognise an S4 RNA-binding domain in the interval 89–152; sequence MRLDNILFRL…NSRTLVQNLL (64 aa).

The protein belongs to the universal ribosomal protein uS4 family. In terms of assembly, part of the 30S ribosomal subunit. Contacts protein S5. The interaction surface between S4 and S5 is involved in control of translational fidelity.

The protein resides in the plastid. Its subcellular location is the chloroplast. In terms of biological role, one of the primary rRNA binding proteins, it binds directly to 16S rRNA where it nucleates assembly of the body of the 30S subunit. Its function is as follows. With S5 and S12 plays an important role in translational accuracy. The protein is Small ribosomal subunit protein uS4c (rps4) of Arabidopsis thaliana (Mouse-ear cress).